The chain runs to 85 residues: Large ribosomal subunit protein bL31 (85 aa).

The disordered stretch occupies residues 65-85 (YGMGGAGKAGEDKKAGDKADA). The span at 73–85 (AGEDKKAGDKADA) shows a compositional bias: basic and acidic residues.

This sequence belongs to the bacterial ribosomal protein bL31 family. Type A subfamily. Part of the 50S ribosomal subunit.

In terms of biological role, binds the 23S rRNA. In Synechococcus sp. (strain WH7803), this protein is Large ribosomal subunit protein bL31.